A 243-amino-acid chain; its full sequence is Aspartate/glutamate leucyltransferase (243 aa).

The protein belongs to the R-transferase family. Bpt subfamily.

Its subcellular location is the cytoplasm. The catalysed reaction is N-terminal L-glutamyl-[protein] + L-leucyl-tRNA(Leu) = N-terminal L-leucyl-L-glutamyl-[protein] + tRNA(Leu) + H(+). It catalyses the reaction N-terminal L-aspartyl-[protein] + L-leucyl-tRNA(Leu) = N-terminal L-leucyl-L-aspartyl-[protein] + tRNA(Leu) + H(+). In terms of biological role, functions in the N-end rule pathway of protein degradation where it conjugates Leu from its aminoacyl-tRNA to the N-termini of proteins containing an N-terminal aspartate or glutamate. The sequence is that of Aspartate/glutamate leucyltransferase from Teredinibacter turnerae (strain ATCC 39867 / T7901).